The following is a 203-amino-acid chain: Endo-type membrane-bound lytic murein transglycosylase A (203 aa).

Positions 1–15 (MKLRWFAFLVVLLAG) are cleaved as a signal peptide. Cysteine 16 carries N-palmitoyl cysteine lipidation. Residue cysteine 16 is the site of S-diacylglycerol cysteine attachment.

It belongs to the transglycosylase Slt family.

It is found in the cell outer membrane. The catalysed reaction is Endolytic cleavage of the (1-&gt;4)-beta-glycosidic linkage between N-acetylmuramic acid (MurNAc) and N-acetylglucosamine (GlcNAc) residues in peptidoglycan with concomitant formation of a 1,6-anhydrobond in the MurNAc residue.. In terms of biological role, murein-degrading enzyme. May play a role in recycling of muropeptides during cell elongation and/or cell division. Preferentially cleaves at a distance of more than two disaccharide units from the ends of the glycan chain. In Escherichia fergusonii (strain ATCC 35469 / DSM 13698 / CCUG 18766 / IAM 14443 / JCM 21226 / LMG 7866 / NBRC 102419 / NCTC 12128 / CDC 0568-73), this protein is Endo-type membrane-bound lytic murein transglycosylase A.